The following is a 664-amino-acid chain: MERPEEGKQSPPPQPWGRLLRLGAEEGEPHVLLRKREWTIGRRRGCDLSFPSNKLVSGDHCRIVVDEKSGQVTLEDTSTSGTVINKLKVVKKQTCPLQTGDVIYLVYRKNEPEHNVAYLYESLSEKQGMTQESFEANKENVFHGTKDTSGAGAGRGADPRVPPSSPATQVCFEEPQPSTSTSDLFPTASASSTEPSPAGRERSSSCGSGGGGISPKGSGPSVASDEVSSFASALPDRKTASFSSLEPQDQEDLEPVKKKMRGDGDLDLNGQLLVAQPRRNAQTVHEDVRAAAGKPDKMEETLTCIICQDLLHDCVSLQPCMHTFCAACYSGWMERSSLCPTCRCPVERICKNHILNNLVEAYLIQHPDKSRSEEDVQSMDARNKITQDMLQPKVRRSFSDEEGSSEDLLELSDVDSESSDISQPYVVCRQCPEYRRQAAQPPHCPAPEGEPGAPQALGDAPSTSVSLTTAVQDYVCPLQGSHALCTCCFQPMPDRRAEREQDPRVAPQQCAVCLQPFCHLYWGCTRTGCYGCLAPFCELNLGDKCLDGVLNNNSYESDILKNYLATRGLTWKNMLTESLVALQRGVFLLSDYRVTGDTVLCYCCGLRSFRELTYQYRQNIPASELPVAVTSRPDCYWGRNCRTQVKAHHAMKFNHICEQTRFKN.

A disordered region spans residues 1-21; sequence MERPEEGKQSPPPQPWGRLLR. The region spanning 38-89 is the FHA domain; the sequence is WTIGRRRGCDLSFPSNKLVSGDHCRIVVDEKSGQVTLEDTSTSGTVINKLKV. The segment at 142–267 is disordered; that stretch reads FHGTKDTSGA…KKMRGDGDLD (126 aa). Residues 186-198 are compositionally biased toward low complexity; sequence PTASASSTEPSPA. A Phosphoserine modification is found at Ser-244. The span at 254 to 264 shows a compositional bias: basic and acidic residues; that stretch reads EPVKKKMRGDG. The RING-type zinc finger occupies 304–343; that stretch reads CIICQDLLHDCVSLQPCMHTFCAACYSGWMERSSLCPTCR. Phosphothreonine is present on Thr-386. Disordered stretches follow at residues 388-417 and 439-461; these read DMLQ…VDSE and AQPP…GDAP. The segment covering 400-417 has biased composition (acidic residues); the sequence is DEEGSSEDLLELSDVDSE. The PBZ-type zinc finger occupies 633-655; the sequence is PDCYWGRNCRTQVKAHHAMKFNH.

Belongs to the CHFR family. As to quaternary structure, interacts with HDAC1 and HDAC2. Interacts with PML (with sumoylated form of PML). Post-translationally, poly-ADP-ribosylated. In addition to binding non covalently poly(ADP-ribose) via its PBZ-type zinc finger, the protein is also covalently poly-ADP-ribosylated by PARP1. Autoubiquitinated; may regulate its cellular level. In terms of processing, phosphorylated by PKB. Phosphorylation may affect its E3 ligase activity. In terms of tissue distribution, ubiquitous.

The protein localises to the nucleus. The protein resides in the PML body. It catalyses the reaction S-ubiquitinyl-[E2 ubiquitin-conjugating enzyme]-L-cysteine + [acceptor protein]-L-lysine = [E2 ubiquitin-conjugating enzyme]-L-cysteine + N(6)-ubiquitinyl-[acceptor protein]-L-lysine.. It functions in the pathway protein modification; protein ubiquitination. E3 ubiquitin-protein ligase that functions in the antephase checkpoint by actively delaying passage into mitosis in response to microtubule poisons. Acts in early prophase before chromosome condensation, when the centrosome move apart from each other along the periphery of the nucleus. Probably involved in signaling the presence of mitotic stress caused by microtubule poisons by mediating the 'Lys-48'-linked ubiquitination of target proteins, leading to their degradation by the proteasome. Promotes the ubiquitination and subsequent degradation of AURKA and PLK1. Probably acts as a tumor suppressor, possibly by mediating the polyubiquitination of HDAC1, leading to its degradation. May also promote the formation of 'Lys-63'-linked polyubiquitin chains and functions with the specific ubiquitin-conjugating UBC13-MMS2 (UBE2N-UBE2V2) heterodimer. Substrates that are polyubiquitinated at 'Lys-63' are usually not targeted for degradation, but are rather involved in signaling cellular stress. The chain is E3 ubiquitin-protein ligase CHFR (CHFR) from Homo sapiens (Human).